We begin with the raw amino-acid sequence, 260 residues long: Carbonic anhydrase 3 (260 aa).

At Ala2 the chain carries N-acetylalanine. In terms of domain architecture, Alpha-carbonic anhydrase spans 3-259 (KEWGYADHNG…IKGRIVKASF (257 aa)). Ser29, Ser43, Ser50, and Ser55 each carry phosphoserine. Residues 64 to 67 (KTCR) are involved in proton transfer. A Phosphothreonine modification is found at Thr73. Positions 94, 96, and 119 each coordinate Zn(2+). Tyr127 carries the phosphotyrosine modification. The residue at position 176 (Thr176) is a Phosphothreonine. Residues Cys182 and Cys187 each carry the S-glutathionyl cysteine modification. 198 to 199 (TT) serves as a coordination point for substrate. A Phosphothreonine modification is found at Thr216. Phosphoserine is present on Ser219.

The protein belongs to the alpha-carbonic anhydrase family. The cofactor is Zn(2+). S-thiolated both by thiol-disulfide exchange with glutathione disulfide and by oxyradical-initiated S-thiolation with reduced glutathione. In terms of processing, S-glutathionylated in hepatocytes under oxidative stress.

The protein localises to the cytoplasm. It carries out the reaction hydrogencarbonate + H(+) = CO2 + H2O. With respect to regulation, inhibited by acetazolamide. In terms of biological role, reversible hydration of carbon dioxide. This is Carbonic anhydrase 3 from Sus scrofa (Pig).